A 200-amino-acid chain; its full sequence is LexA repressor (200 aa).

Residues R28 to K48 constitute a DNA-binding region (H-T-H motif). Residues S118 and K155 each act as for autocatalytic cleavage activity in the active site.

The protein belongs to the peptidase S24 family. As to quaternary structure, homodimer.

The enzyme catalyses Hydrolysis of Ala-|-Gly bond in repressor LexA.. Its function is as follows. Represses a number of genes involved in the response to DNA damage (SOS response), including recA and lexA. In the presence of single-stranded DNA, RecA interacts with LexA causing an autocatalytic cleavage which disrupts the DNA-binding part of LexA, leading to derepression of the SOS regulon and eventually DNA repair. The sequence is that of LexA repressor from Teredinibacter turnerae (strain ATCC 39867 / T7901).